The following is a 55-amino-acid chain: Mitochondrial import receptor subunit TOM7 homolog (55 aa).

Topologically, residues 1 to 20 are cytoplasmic; sequence MVKLSKEAKQRLQQLFKGGQ. The chain crosses the membrane as a helical span at residues 21-36; that stretch reads FAIRWGFIPLVIYLGF. Topologically, residues 37–55 are mitochondrial intermembrane; it reads KRGADPGMPEPTVLSLLWG.

Belongs to the Tom7 family. As to quaternary structure, forms part of the preprotein translocase complex of the outer mitochondrial membrane (TOM complex) which consists of at least 7 different proteins (TOMM5, TOMM6, TOMM7, TOMM20, TOMM22, TOMM40 and TOMM70).

It localises to the mitochondrion outer membrane. Its function is as follows. Required for assembly and stability of the TOM complex. Positive regulator of PRKN translocation to damaged mitochondria. Acts probably by stabilizing PINK1 on the outer membrane of depolarized mitochondria. The sequence is that of Mitochondrial import receptor subunit TOM7 homolog (TOMM7) from Bos taurus (Bovine).